Here is a 141-residue protein sequence, read N- to C-terminus: Lutropin subunit beta (141 aa).

The first 20 residues, 1 to 20 (MEMFQGLLLWLLLGVAGVWA), serve as a signal peptide directing secretion. 6 cysteine pairs are disulfide-bonded: C29-C77, C43-C92, C46-C130, C54-C108, C58-C110, and C113-C120. A glycan (N-linked (GlcNAc...) asparagine) is linked at N33.

This sequence belongs to the glycoprotein hormones subunit beta family. In terms of assembly, heterodimer of a common alpha chain and a unique beta chain which confers biological specificity to thyrotropin, lutropin, follitropin and gonadotropin.

The protein localises to the secreted. Functionally, promotes spermatogenesis and ovulation by stimulating the testes and ovaries to synthesize steroids. This chain is Lutropin subunit beta (LHB), found in Bos taurus (Bovine).